The sequence spans 617 residues: Na(+)/H(+) antiporter NhaA 1 (617 aa).

Positions 1–26 (MTVTEPATQRGFPLLPSRLSRGSKAT) are disordered. Positions 1 to 433 (MTVTEPATQR…GWAIFRITDW (433 aa)) are na(+)/H(+) antiporter NhaA. 11 consecutive transmembrane segments (helical) span residues 33 to 53 (AAAL…SPWA), 75 to 95 (MTVK…IVGL), 113 to 133 (AVPV…FLAF), 141 to 161 (HAWG…LAII), 171 to 191 (LFLL…IAVL), 198 to 218 (VAPL…RYLP), 234 to 254 (IALY…ALLI), 304 to 324 (VSPV…AGVL), 341 to 361 (GIVA…TWLI), 378 to 398 (IAGG…IVDI), and 411 to 431 (IGVL…FRIT). The Thioredoxin domain occupies 434-617 (LSPPEPVGLK…LIRALEAGRG (184 aa)).

This sequence in the N-terminal section; belongs to the NhaA Na(+)/H(+) (TC 2.A.33) antiporter family.

The protein localises to the cell membrane. The enzyme catalyses Na(+)(in) + 2 H(+)(out) = Na(+)(out) + 2 H(+)(in). In terms of biological role, na(+)/H(+) antiporter that extrudes sodium in exchange for external protons. The polypeptide is Na(+)/H(+) antiporter NhaA 1 (Mycolicibacterium gilvum (strain PYR-GCK) (Mycobacterium gilvum (strain PYR-GCK))).